The following is a 355-amino-acid chain: 3-dehydroquinate synthase (355 aa).

NAD(+) is bound by residues 71–76 (EGEERK), 105–109 (GVVGD), 129–130 (TS), lysine 142, and lysine 151. Residues glutamate 184, histidine 246, and histidine 263 each contribute to the Zn(2+) site.

Belongs to the sugar phosphate cyclases superfamily. Dehydroquinate synthase family. The cofactor is Co(2+). Zn(2+) serves as cofactor. NAD(+) is required as a cofactor.

It is found in the cytoplasm. It catalyses the reaction 7-phospho-2-dehydro-3-deoxy-D-arabino-heptonate = 3-dehydroquinate + phosphate. It functions in the pathway metabolic intermediate biosynthesis; chorismate biosynthesis; chorismate from D-erythrose 4-phosphate and phosphoenolpyruvate: step 2/7. Functionally, catalyzes the conversion of 3-deoxy-D-arabino-heptulosonate 7-phosphate (DAHP) to dehydroquinate (DHQ). The protein is 3-dehydroquinate synthase of Streptococcus pneumoniae serotype 19F (strain G54).